The following is a 329-amino-acid chain: Quinone oxidoreductase (329 aa).

A2 carries the N-acetylalanine modification. K23 carries the post-translational modification N6-acetyllysine. NADP(+)-binding positions include Y53, 158 to 161, G181, H200, N229, 246 to 249, and 269 to 271; these read SGGV, VGSR, and VTL. Position 248 is a phosphoserine (S248). K296 is modified (N6-succinyllysine).

Belongs to the zinc-containing alcohol dehydrogenase family. Quinone oxidoreductase subfamily. As to quaternary structure, homotetramer. In terms of tissue distribution, only very low amounts in the lens.

It localises to the cytoplasm. The enzyme catalyses 2 a quinone + NADPH + H(+) = 2 a 1,4-benzosemiquinone + NADP(+). Functionally, does not have alcohol dehydrogenase activity. Binds NADP and acts through a one-electron transfer process. Orthoquinones, such as 1,2-naphthoquinone or 9,10-phenanthrenequinone, are the best substrates (in vitro). May act in the detoxification of xenobiotics. Interacts with (AU)-rich elements (ARE) in the 3'-UTR of target mRNA species. Enhances the stability of mRNA coding for BCL2. NADPH binding interferes with mRNA binding. In Homo sapiens (Human), this protein is Quinone oxidoreductase (CRYZ).